The chain runs to 659 residues: UvrABC system protein B (659 aa).

The Helicase ATP-binding domain maps to 25–412; it reads QSIENGNRGQ…SEIVAEQIIR (388 aa). Residue 38–45 coordinates ATP; the sequence is GVTGSGKT. The Beta-hairpin signature appears at 91–114; that stretch reads YYDYYQPEAYVPQTDTFIEKDASI. A Helicase C-terminal domain is found at 429–582; that stretch reads QIDDLYGEIQ…QMEYNEEHNI (154 aa). Residues 622 to 657 form the UVR domain; sequence EKLIEQYEEEMKEAAKNLQFERAAELRDIIKDLKEN.

This sequence belongs to the UvrB family. As to quaternary structure, forms a heterotetramer with UvrA during the search for lesions. Interacts with UvrC in an incision complex.

It is found in the cytoplasm. In terms of biological role, the UvrABC repair system catalyzes the recognition and processing of DNA lesions. A damage recognition complex composed of 2 UvrA and 2 UvrB subunits scans DNA for abnormalities. Upon binding of the UvrA(2)B(2) complex to a putative damaged site, the DNA wraps around one UvrB monomer. DNA wrap is dependent on ATP binding by UvrB and probably causes local melting of the DNA helix, facilitating insertion of UvrB beta-hairpin between the DNA strands. Then UvrB probes one DNA strand for the presence of a lesion. If a lesion is found the UvrA subunits dissociate and the UvrB-DNA preincision complex is formed. This complex is subsequently bound by UvrC and the second UvrB is released. If no lesion is found, the DNA wraps around the other UvrB subunit that will check the other stand for damage. In Clostridium perfringens (strain 13 / Type A), this protein is UvrABC system protein B.